A 301-amino-acid chain; its full sequence is ATP synthase gamma chain (301 aa).

This sequence belongs to the ATPase gamma chain family. In terms of assembly, F-type ATPases have 2 components, CF(1) - the catalytic core - and CF(0) - the membrane proton channel. CF(1) has five subunits: alpha(3), beta(3), gamma(1), delta(1), epsilon(1). CF(0) has three main subunits: a, b and c.

It is found in the cell inner membrane. Functionally, produces ATP from ADP in the presence of a proton gradient across the membrane. The gamma chain is believed to be important in regulating ATPase activity and the flow of protons through the CF(0) complex. The sequence is that of ATP synthase gamma chain from Helicobacter pylori (strain G27).